Here is a 334-residue protein sequence, read N- to C-terminus: D-alanine--D-alanine ligase (334 aa).

Positions 114–314 (KRIWRFEGLP…YEELCLRILA (201 aa)) constitute an ATP-grasp domain. ATP is bound at residue 140–195 (LEDLGSPMIVKPSREGSTIGLTKVTSPGQCEQAYRLASRYDPEVLCEQFIEGEETT). Residues Asp267, Glu281, and Asn283 each coordinate Mg(2+).

Belongs to the D-alanine--D-alanine ligase family. Requires Mg(2+) as cofactor. Mn(2+) is required as a cofactor.

It localises to the cytoplasm. The catalysed reaction is 2 D-alanine + ATP = D-alanyl-D-alanine + ADP + phosphate + H(+). It functions in the pathway cell wall biogenesis; peptidoglycan biosynthesis. Functionally, cell wall formation. This chain is D-alanine--D-alanine ligase, found in Paracidovorax citrulli (strain AAC00-1) (Acidovorax citrulli).